A 396-amino-acid polypeptide reads, in one-letter code: MAKAKFERNKPHCNIGTIGHVDHGKTSLTAAITKVLAEAGGATFTAYDQIDKAPEEKARGITISTSHVEYETPNRHYAHVDCPGHADYVKNMITGAAQMDGAILVVSAADGPMPQTREHILLARQVGVPAIVVFLNKCDMVDDPELLELVEMEVRELLSKYEFPGDDIPIIKGSALAALEDSDAKLGKEAVLELMKAVDAYIPQPERPVDQPFLMPVEDVFSISGRGTVVTGRVERGIVKVGEEIEIVGIRETQKTTVTGVEMFRKLLDQGQAGDNIGALLRGTKREDVERGQVLCKPGSVKPHTKFKAEAYILTKEEGGRHTPFFTNYRPQFYFRTTDVTGVVHLPAGTEMVMPGDNVAMEVHLIVPIAMEEKLRFAIREGGRTVGAGVVASIIE.

A tr-type G domain is found at 10-206 (KPHCNIGTIG…AVDAYIPQPE (197 aa)). Residues 19-26 (GHVDHGKT) are G1. GTP is bound at residue 19–26 (GHVDHGKT). Thr-26 lines the Mg(2+) pocket. The interval 60–64 (GITIS) is G2. Residues 81–84 (DCPG) form a G3 region. GTP is bound by residues 81-85 (DCPGH) and 136-139 (NKCD). Residues 136–139 (NKCD) are G4. The interval 174-176 (SAL) is G5.

Belongs to the TRAFAC class translation factor GTPase superfamily. Classic translation factor GTPase family. EF-Tu/EF-1A subfamily. Monomer.

The protein resides in the cytoplasm. It catalyses the reaction GTP + H2O = GDP + phosphate + H(+). Functionally, GTP hydrolase that promotes the GTP-dependent binding of aminoacyl-tRNA to the A-site of ribosomes during protein biosynthesis. The sequence is that of Elongation factor Tu from Nitrobacter winogradskyi (strain ATCC 25391 / DSM 10237 / CIP 104748 / NCIMB 11846 / Nb-255).